A 912-amino-acid chain; its full sequence is Tubulin polyglutamylase TTLL7 (912 aa).

Residues 38–390 (KGIITANVAG…RTSDKRKNLA (353 aa)) enclose the TTL domain. ATP-binding positions include lysine 160, 166-167 (MG), 188-191 (QEYI), and 201-203 (KFD). Arginine 227 is a binding site for L-glutamate. 249–250 (TN) is a binding site for ATP. L-glutamate contacts are provided by tyrosine 251, serine 252, and lysine 271. Aspartate 336, glutamate 349, and asparagine 351 together coordinate Mg(2+). An L-glutamate-binding site is contributed by lysine 367. The tract at residues 388–450 (NLAKQKAEAQ…VSQEEHENRH (63 aa)) is c-MTBD region. 2 disordered regions span residues 547-570 (YGSS…ENEK) and 658-688 (PTSA…STNT). Residues 549 to 563 (SSDSSYDSSSSSSNS) are compositionally biased toward low complexity. Residues 659-671 (TSASRSHSLNRAS) are compositionally biased toward polar residues.

This sequence belongs to the tubulin--tyrosine ligase family. As to quaternary structure, interacts with both alpha- and beta-tubulin (via C-terminal tubulin tails). The cofactor is Mg(2+). In terms of tissue distribution, highly expressed in brain, testis and trachea. Expressed in brain, heart, kidney, liver, lung, muscle and trachea. In the brain, highly expressed in hippocampus, thalamus, olfactory bulb and cerebellum cortex, corpus callosum and striatum.

Its subcellular location is the cell projection. The protein resides in the cilium. It localises to the cytoplasm. The protein localises to the cytoskeleton. It is found in the cilium basal body. Its subcellular location is the dendrite. The protein resides in the perikaryon. The catalysed reaction is L-glutamyl-[protein] + L-glutamate + ATP = gamma-L-glutamyl-L-glutamyl-[protein] + ADP + phosphate + H(+). It catalyses the reaction (L-glutamyl)(n)-gamma-L-glutamyl-L-glutamyl-[protein] + L-glutamate + ATP = (L-glutamyl)(n+1)-gamma-L-glutamyl-L-glutamyl-[protein] + ADP + phosphate + H(+). Polyglutamylase which modifies tubulin, generating polyglutamate side chains of variable lengths on the gamma-carboxyl group of specific glutamate residues within the C-terminal tail of tubulin. Mediates both ATP-dependent initiation and elongation steps of the polyglutamylation reaction. Preferentially modifies the beta-tubulin tail over an alpha-tail. Competes with monoglycylase TTLL3 for modification site on beta-tubulin substrate, thereby creating an anticorrelation between glycylation and glutamylation reactions. Required for neurite growth; responsible for the strong increase in tubulin polyglutamylation during postnatal neuronal maturation. In Mus musculus (Mouse), this protein is Tubulin polyglutamylase TTLL7.